Consider the following 73-residue polypeptide: Translation initiation factor IF-1 (73 aa).

Positions 1 to 73 (MAKKDGAIEV…SRGRIVYRYK (73 aa)) constitute an S1-like domain.

This sequence belongs to the IF-1 family. Component of the 30S ribosomal translation pre-initiation complex which assembles on the 30S ribosome in the order IF-2 and IF-3, IF-1 and N-formylmethionyl-tRNA(fMet); mRNA recruitment can occur at any time during PIC assembly.

Its subcellular location is the cytoplasm. One of the essential components for the initiation of protein synthesis. Stabilizes the binding of IF-2 and IF-3 on the 30S subunit to which N-formylmethionyl-tRNA(fMet) subsequently binds. Helps modulate mRNA selection, yielding the 30S pre-initiation complex (PIC). Upon addition of the 50S ribosomal subunit IF-1, IF-2 and IF-3 are released leaving the mature 70S translation initiation complex. In Mycobacterium avium (strain 104), this protein is Translation initiation factor IF-1.